Reading from the N-terminus, the 125-residue chain is Transmembrane protein 14EP (125 aa).

2 consecutive transmembrane segments (helical) span residues V9–G29 and I81–S101.

Belongs to the TMEM14 family.

The protein localises to the membrane. This chain is Transmembrane protein 14EP (TMEM14EP), found in Homo sapiens (Human).